We begin with the raw amino-acid sequence, 355 residues long: 3-dehydroquinate synthase (355 aa).

NAD(+) contacts are provided by residues Glu71–Lys76, Gly105–Asp109, Thr129–Ser130, Lys142, and Lys151. 3 residues coordinate Zn(2+): Glu184, His246, and His263.

Belongs to the sugar phosphate cyclases superfamily. Dehydroquinate synthase family. Requires Co(2+) as cofactor. It depends on Zn(2+) as a cofactor. NAD(+) serves as cofactor.

It localises to the cytoplasm. The catalysed reaction is 7-phospho-2-dehydro-3-deoxy-D-arabino-heptonate = 3-dehydroquinate + phosphate. The protein operates within metabolic intermediate biosynthesis; chorismate biosynthesis; chorismate from D-erythrose 4-phosphate and phosphoenolpyruvate: step 2/7. Functionally, catalyzes the conversion of 3-deoxy-D-arabino-heptulosonate 7-phosphate (DAHP) to dehydroquinate (DHQ). The polypeptide is 3-dehydroquinate synthase (Streptococcus sanguinis (strain SK36)).